A 99-amino-acid chain; its full sequence is Putative septation protein SpoVG (99 aa).

This sequence belongs to the SpoVG family.

Its function is as follows. Could be involved in septation. The chain is Putative septation protein SpoVG from Exiguobacterium sp. (strain ATCC BAA-1283 / AT1b).